Reading from the N-terminus, the 247-residue chain is RNA polymerase sigma factor FliA (247 aa).

The segment at 22 to 94 (LIQRYAPLVK…MLDEVRKGDW (73 aa)) is sigma-70 factor domain-2. The short motif at 49–52 (DLMQ) is the Interaction with polymerase core subunit RpoC element. The tract at residues 102-171 (NTRMVTDAIR…GLPEDTSLSH (70 aa)) is sigma-70 factor domain-3. Residues 190 to 238 (AIAKLPERERLVLALYYDEELNLKEIGEVLGVSESRVSQLHSQCAARLR) form a sigma-70 factor domain-4 region. The H-T-H motif DNA-binding region spans 212–231 (LKEIGEVLGVSESRVSQLHS).

Belongs to the sigma-70 factor family. FliA subfamily.

The protein localises to the cytoplasm. Sigma factors are initiation factors that promote the attachment of RNA polymerase to specific initiation sites and are then released. This sigma factor controls the expression of flagella-related genes. Required for the flagellin gene (fliC) expression. This chain is RNA polymerase sigma factor FliA, found in Pseudomonas aeruginosa (strain ATCC 15692 / DSM 22644 / CIP 104116 / JCM 14847 / LMG 12228 / 1C / PRS 101 / PAO1).